The sequence spans 696 residues: Chitin synthase regulator SKT5 (696 aa).

Disordered stretches follow at residues G37–Q67 and Q90–R145. A compositionally biased stretch (basic and acidic residues) spans S41–E53. Positions L104–G126 are enriched in low complexity. Positions R129–K139 are enriched in polar residues. The residue at position 148 (S148) is a Phosphoserine. 7 Sel1-like repeats span residues S271–H306, I307–H342, P343–N382, A386–H423, V424–D460, S461–L498, and P499–D534. Residues S561 and S563 each carry the phosphoserine modification. Position 564 is a phosphothreonine (T564). 3 stretches are compositionally biased toward polar residues: residues S576–T593, L605–K634, and V651–M661. The segment at S576–M696 is disordered. The segment covering I662–K675 has biased composition (basic and acidic residues). Residues K680 to M696 are compositionally biased toward basic residues. C693 bears the Cysteine methyl ester mark. Residue C693 is the site of S-farnesyl cysteine attachment. Positions V694 to M696 are cleaved as a propeptide — removed in mature form.

Belongs to the SKT5 family. As to quaternary structure, may interact with CHS3 and seems to be an adapter (along with BNI4) to link CHS3 to septins. Farnesylation is required for chitin synthase CHS3 activity but is not required for SKT5 membrane association.

Its subcellular location is the cell membrane. In terms of biological role, activator of the chitin synthase CHS3 which polymerizes chitin, a structural polymer of the fungal cell wall. The polypeptide is Chitin synthase regulator SKT5 (Saccharomyces cerevisiae (strain ATCC 204508 / S288c) (Baker's yeast)).